We begin with the raw amino-acid sequence, 620 residues long: uncharacterized protein (620 aa).

Low complexity-rich tracts occupy residues Arg278–Pro290 and Ala301–Thr319. A disordered region spans residues Arg278 to Ala620. The span at Ala336–Glu411 shows a compositional bias: basic and acidic residues. 2 stretches are compositionally biased toward pro residues: residues Val446–Thr470 and Arg481–Pro500. 2 stretches are compositionally biased toward low complexity: residues Ser501 to Pro512 and Thr522 to Ala541. Positions Pro542 to Pro551 are enriched in pro residues. Low complexity predominate over residues Ser597–Ser607.

It belongs to the herpesviridae US22 family.

This is an uncharacterized protein from Homo sapiens (Human).